The sequence spans 368 residues: uncharacterized protein (368 aa).

The N-terminal stretch at 1-19 is a signal peptide; the sequence is MHVSMIIFVSIFSIKYIMA. N-linked (GlcNAc...) asparagine; by host glycosylation is found at Asn99, Asn170, Asn266, and Asn295.

This is an uncharacterized protein from Ostreid herpesvirus 1 (isolate France) (OsHV-1).